The sequence spans 522 residues: Protein nucleotidyltransferase YdiU (522 aa).

The ATP site is built by Gly-109, Gly-111, Arg-112, Lys-132, Asp-144, Gly-145, Arg-195, and Arg-202. The active-site Proton acceptor is the Asp-271. Residues Asn-272 and Asp-281 each contribute to the Mg(2+) site. Residue Asp-281 participates in ATP binding.

This sequence belongs to the SELO family. It depends on Mg(2+) as a cofactor. The cofactor is Mn(2+).

It carries out the reaction L-seryl-[protein] + ATP = 3-O-(5'-adenylyl)-L-seryl-[protein] + diphosphate. The enzyme catalyses L-threonyl-[protein] + ATP = 3-O-(5'-adenylyl)-L-threonyl-[protein] + diphosphate. The catalysed reaction is L-tyrosyl-[protein] + ATP = O-(5'-adenylyl)-L-tyrosyl-[protein] + diphosphate. It catalyses the reaction L-histidyl-[protein] + UTP = N(tele)-(5'-uridylyl)-L-histidyl-[protein] + diphosphate. It carries out the reaction L-seryl-[protein] + UTP = O-(5'-uridylyl)-L-seryl-[protein] + diphosphate. The enzyme catalyses L-tyrosyl-[protein] + UTP = O-(5'-uridylyl)-L-tyrosyl-[protein] + diphosphate. Nucleotidyltransferase involved in the post-translational modification of proteins. It can catalyze the addition of adenosine monophosphate (AMP) or uridine monophosphate (UMP) to a protein, resulting in modifications known as AMPylation and UMPylation. In Burkholderia orbicola (strain MC0-3), this protein is Protein nucleotidyltransferase YdiU.